A 632-amino-acid polypeptide reads, in one-letter code: Serine/threonine-protein kinase plk-2 (632 aa).

The interval 1 to 26 (MQRVQPSAARVKSQKKEKAPPDVPDV) is disordered. Residues 36–287 (YEKGKFLGKG…ARAVCRDHFF (252 aa)) enclose the Protein kinase domain. ATP contacts are provided by residues 42 to 50 (LGKGGFAHC) and lysine 65. The active-site Proton acceptor is aspartate 159. Residues 313–334 (AEENVSPSGTIDQRGPHQAGRS) form a disordered region. POLO box domains follow at residues 405-484 (WISK…YMND) and 506-588 (TLRV…RLVE).

This sequence belongs to the protein kinase superfamily. Ser/Thr protein kinase family. CDC5/Polo subfamily. As to quaternary structure, interacts (via POLO box domain) with mex-5 and mex-6. Interacts (via POLO box domain) with him-8 (via N-terminus); the interaction mediates plk-2 recruitment to the pairing region of X chromosomes during meiosis. Interacts with sun-1. May interact with nicotinic acetylcholine receptor. The cofactor is Mg(2+). Expressed in oocytes.

The protein localises to the nucleus. It is found in the cytoplasm. It localises to the cytoskeleton. Its subcellular location is the microtubule organizing center. The protein resides in the centrosome. The protein localises to the chromosome. It is found in the centromere. It localises to the kinetochore. It catalyses the reaction L-seryl-[protein] + ATP = O-phospho-L-seryl-[protein] + ADP + H(+). The catalysed reaction is L-threonyl-[protein] + ATP = O-phospho-L-threonyl-[protein] + ADP + H(+). Functionally, serine/threonine-protein kinase which plays a role, during oogenesis, in chromosome pairing and synapsis, by facilitating the recruitment and attachment of meiotic chromosomes to the nuclear envelope during prophase. Promotes the localization of brc-1 to the short arm of homologous chromosomes during meiotic prophase I. Regulates the formation of sun-1 patches along the nuclear envelope. Promotes meiotic nuclei apoptosis in response to chromosomal asynapsis. Plays a redundant role with plk-1 in the establishment of cell polarity downstream of mex-5 and mex-6 during the first embryonic cell divisions. Plays a role in nicotinic acetylcholine receptor-mediated sensitivity to nicotine but not levamisole. Regulates motility. The polypeptide is Serine/threonine-protein kinase plk-2 (Caenorhabditis elegans).